The chain runs to 230 residues: Sugar fermentation stimulation protein homolog (230 aa).

This sequence belongs to the SfsA family.

This Clostridium botulinum (strain Loch Maree / Type A3) protein is Sugar fermentation stimulation protein homolog.